Here is a 272-residue protein sequence, read N- to C-terminus: B3 domain-containing protein Os10g0323000 (272 aa).

A DNA-binding region (TF-B3 1) is located at residues 39–132 (RYGENRKHGQ…TLDLLILDKH (94 aa)). Positions 139–171 (PPSKRDLKLKSKRSTHQDSKGHPSNTDPGPSRI) are disordered. Positions 141–159 (SKRDLKLKSKRSTHQDSKG) are enriched in basic and acidic residues. A DNA-binding region (TF-B3 2) is located at residues 180–272 (ESSANTQLLV…THLGVIVDIF (93 aa)).

Its subcellular location is the nucleus. The chain is B3 domain-containing protein Os10g0323000 from Oryza sativa subsp. japonica (Rice).